Reading from the N-terminus, the 249-residue chain is 5'-nucleotidase SurE (249 aa).

A divalent metal cation contacts are provided by Asp8, Asp9, Ser39, and Asn91.

This sequence belongs to the SurE nucleotidase family. The cofactor is a divalent metal cation.

It is found in the cytoplasm. The catalysed reaction is a ribonucleoside 5'-phosphate + H2O = a ribonucleoside + phosphate. In terms of biological role, nucleotidase that shows phosphatase activity on nucleoside 5'-monophosphates. The polypeptide is 5'-nucleotidase SurE (Haemophilus influenzae (strain PittEE)).